Here is a 458-residue protein sequence, read N- to C-terminus: MSKAWSGRFKEDTSKDVELFTESISFDKALAMYDLEQDFAHLEALLKAGVISKDSYENIKSGLKKIKQEIEKNEFYFDISKEDIHMNIESRLYELIGEDAKKLHTGRSRNDQVNTDLRLYLKDHILKIFELLKALKQQLVLKAKEYEDLIMPGYTHLQRAQPVLVAHYLLSFKEAFLRDSQRLIDAYRRIDTLTLGSGALAGADFPLDRFLEASILNFSKISRNSMDAVADRDFAIEYMFCLSSIAMHLSRMAEDFIIFNTEEFKFIDLPDSLCTGSSIMPQKKNPDVLELIRGKAGRVYANLINLMVNLKGLPMTYNRDLQEDKEPIFDATNTILNSLKMMILIIKDIRFRQNIEAGNLLLATDLANYLVEKNIPFREAHHIVGNIVAYAIENQKPLESLTKEELNNFSKAFDKDAKDIISKESSILRKKTYGSTNKDFVKKQIDLSSSEESIDKNL.

It belongs to the lyase 1 family. Argininosuccinate lyase subfamily.

Its subcellular location is the cytoplasm. It catalyses the reaction 2-(N(omega)-L-arginino)succinate = fumarate + L-arginine. It functions in the pathway amino-acid biosynthesis; L-arginine biosynthesis; L-arginine from L-ornithine and carbamoyl phosphate: step 3/3. The protein is Argininosuccinate lyase of Hydrogenobaculum sp. (strain Y04AAS1).